Here is a 98-residue protein sequence, read N- to C-terminus: NADH-ubiquinone oxidoreductase chain 4L (98 aa).

The next 3 membrane-spanning stretches (helical) occupy residues 2-22, 29-49, and 61-81; these read PSISTNITLAFITALLGMLIF, SLLCLEGMMLSMFILSTLTIL, and ILLLVFAACEAAVGLALLVTV.

The protein belongs to the complex I subunit 4L family. Core subunit of respiratory chain NADH dehydrogenase (Complex I) which is composed of 45 different subunits.

The protein resides in the mitochondrion inner membrane. The enzyme catalyses a ubiquinone + NADH + 5 H(+)(in) = a ubiquinol + NAD(+) + 4 H(+)(out). Core subunit of the mitochondrial membrane respiratory chain NADH dehydrogenase (Complex I) which catalyzes electron transfer from NADH through the respiratory chain, using ubiquinone as an electron acceptor. Part of the enzyme membrane arm which is embedded in the lipid bilayer and involved in proton translocation. This is NADH-ubiquinone oxidoreductase chain 4L (MT-ND4L) from Hapalemur aureus (Golden bamboo lemur).